The primary structure comprises 39 residues: Omega-theraphotoxin-Asp1g (39 aa).

Disulfide bonds link C4–C25, C8–C31, and C17–C36.

It belongs to the neurotoxin 12 (Hwtx-2) family. 06 (TXP1) subfamily. Expressed by the venom gland.

The protein localises to the secreted. Inhibits voltage-gated calcium channels (Cav) in rat cerebellar granule cells. Has insecticidal activity. The protein is Omega-theraphotoxin-Asp1g of Aphonopelma sp. (American tarantula).